The primary structure comprises 207 residues: Guanylate kinase (207 aa).

Residues 5–185 (GFVLLISGPS…SYEALRAILI (181 aa)) enclose the Guanylate kinase-like domain. 12 to 19 (GPSGAGKS) lines the ATP pocket.

It belongs to the guanylate kinase family.

The protein localises to the cytoplasm. It carries out the reaction GMP + ATP = GDP + ADP. Functionally, essential for recycling GMP and indirectly, cGMP. The polypeptide is Guanylate kinase (gmk) (Campylobacter jejuni subsp. jejuni serotype O:2 (strain ATCC 700819 / NCTC 11168)).